A 317-amino-acid polypeptide reads, in one-letter code: Zinc finger protein 771 (317 aa).

A Glycyl lysine isopeptide (Lys-Gly) (interchain with G-Cter in SUMO2) cross-link involves residue K33. 8 consecutive C2H2-type zinc fingers follow at residues 63–85 (HACP…ARTH), 91–113 (FACT…GRTH), 119–141 (YQCP…RRRH), 147–169 (YACA…LRVH), 175–197 (YACP…RRTH), 203–225 (YACA…RRVH), 231–253 (HRCA…ARTH), and 259–281 (YPCT…RRAH).

Belongs to the krueppel C2H2-type zinc-finger protein family.

The protein resides in the nucleus. May be involved in transcriptional regulation. The chain is Zinc finger protein 771 (Znf771) from Mus musculus (Mouse).